A 199-amino-acid polypeptide reads, in one-letter code: Recombination protein RecR (199 aa).

A C4-type zinc finger spans residues 56–71; it reads CSICFNWSAEDPCEIC. In terms of domain architecture, Toprim spans 79–174; the sequence is SLWCVVADVK…TLRMTRLAFG (96 aa).

Belongs to the RecR family.

In terms of biological role, may play a role in DNA repair. It seems to be involved in an RecBC-independent recombinational process of DNA repair. It may act with RecF and RecO. The sequence is that of Recombination protein RecR from Synechococcus sp. (strain JA-2-3B'a(2-13)) (Cyanobacteria bacterium Yellowstone B-Prime).